Consider the following 268-residue polypeptide: MGDQSIISALLLGIIEGLTEFIPVSSTAHVLLAGHFLGFKSPGNTFAVLIQLGAILAILLVYFQKLVSIAVAMPTSAKARRFVLAVLVAFLPAAVIGALAHDFIKTVLFETPMLICVVLIIGGFILLAVDRMPLKPKYTDIMDYPPSLAFKIGLFQCLAMIPGTSRSGATIVGALLMGTDKRSAAEFSFFLAMPTMLGAFVLDLYKNRDALSFDDSALIAVGFVAAFVSGLFVVRSLLDFVSRRGFAPFAWWRIVIGALGLVALLVIG.

A run of 7 helical transmembrane segments spans residues 5–25, 43–63, 84–104, 107–127, 184–204, 218–238, and 247–267; these read SIISALLLGIIEGLTEFIPVS, GNTFAVLIQLGAILAILLVYF, LAVLVAFLPAAVIGALAHDFI, VLFETPMLICVVLIIGGFILL, AAEFSFFLAMPTMLGAFVLDL, LIAVGFVAAFVSGLFVVRSLL, and APFAWWRIVIGALGLVALLVI.

It belongs to the UppP family.

It localises to the cell inner membrane. It catalyses the reaction di-trans,octa-cis-undecaprenyl diphosphate + H2O = di-trans,octa-cis-undecaprenyl phosphate + phosphate + H(+). Catalyzes the dephosphorylation of undecaprenyl diphosphate (UPP). Confers resistance to bacitracin. This Agrobacterium fabrum (strain C58 / ATCC 33970) (Agrobacterium tumefaciens (strain C58)) protein is Undecaprenyl-diphosphatase 1.